The primary structure comprises 245 residues: tRNA1(Val) (adenine(37)-N6)-methyltransferase (245 aa).

The protein belongs to the methyltransferase superfamily. tRNA (adenine-N(6)-)-methyltransferase family.

Its subcellular location is the cytoplasm. The enzyme catalyses adenosine(37) in tRNA1(Val) + S-adenosyl-L-methionine = N(6)-methyladenosine(37) in tRNA1(Val) + S-adenosyl-L-homocysteine + H(+). Functionally, specifically methylates the adenine in position 37 of tRNA(1)(Val) (anticodon cmo5UAC). In Escherichia coli O157:H7, this protein is tRNA1(Val) (adenine(37)-N6)-methyltransferase.